Reading from the N-terminus, the 212-residue chain is Thymidylate kinase (212 aa).

An ATP-binding site is contributed by 11–18 (GPEGAGKS).

The protein belongs to the thymidylate kinase family.

It carries out the reaction dTMP + ATP = dTDP + ADP. Its function is as follows. Phosphorylation of dTMP to form dTDP in both de novo and salvage pathways of dTTP synthesis. In Streptococcus sanguinis (strain SK36), this protein is Thymidylate kinase.